The primary structure comprises 171 residues: 3-hydroxydecanoyl-[acyl-carrier-protein] dehydratase (171 aa).

His70 is a catalytic residue.

This sequence belongs to the thioester dehydratase family. FabA subfamily. In terms of assembly, homodimer.

The protein localises to the cytoplasm. It carries out the reaction a (3R)-hydroxyacyl-[ACP] = a (2E)-enoyl-[ACP] + H2O. The enzyme catalyses (3R)-hydroxydecanoyl-[ACP] = (2E)-decenoyl-[ACP] + H2O. The catalysed reaction is (2E)-decenoyl-[ACP] = (3Z)-decenoyl-[ACP]. The protein operates within lipid metabolism; fatty acid biosynthesis. Functionally, necessary for the introduction of cis unsaturation into fatty acids. Catalyzes the dehydration of (3R)-3-hydroxydecanoyl-ACP to E-(2)-decenoyl-ACP and then its isomerization to Z-(3)-decenoyl-ACP. Can catalyze the dehydratase reaction for beta-hydroxyacyl-ACPs with saturated chain lengths up to 16:0, being most active on intermediate chain length. The protein is 3-hydroxydecanoyl-[acyl-carrier-protein] dehydratase of Azotobacter vinelandii (strain DJ / ATCC BAA-1303).